Consider the following 5381-residue polypeptide: Protein purity of essence (5381 aa).

Disordered stretches follow at residues K140–E174, Q339–D364, S599–A621, R683–S709, S1162–T1212, and Q1632–R1659. The span at Q339–Q350 shows a compositional bias: low complexity. 2 stretches are compositionally biased toward low complexity: residues S690–S709 and S1167–S1176. Polar residues predominate over residues Q1632–C1646. The span at D1647 to E1658 shows a compositional bias: basic and acidic residues. The UBR-type zinc finger occupies K1815–R1884. 6 disordered regions span residues K1917–I1939, K2443–T2479, P2632–Q2652, V3037–E3143, K3537–K3562, and H4247–A4280. Polar residues-rich tracts occupy residues N1920–H1930, S2470–T2479, S2643–Q2652, and N3048–T3058. The segment covering G3065–G3075 has biased composition (gly residues). Positions A3084 to S3104 are enriched in polar residues. Gly residues predominate over residues S3119–L3132. The interval P4904–L5374 is UBR4 E3 catalytic module. The HemiRING-type zinc-finger motif lies at G5022 to R5136. Positions 5025, 5028, 5074, and 5077 each coordinate Zn(2+). The UZI domain maps to I5139–L5374.

Belongs to the UBR4 family.

In terms of biological role, has a role in growth of the perineurial glial layer of the larval peripheral nerve. May have a role in male fertility and eye development or function. May bind calmodulin. This Drosophila pseudoobscura pseudoobscura (Fruit fly) protein is Protein purity of essence.